We begin with the raw amino-acid sequence, 396 residues long: Phosphoglycerate kinase (396 aa).

Substrate-binding positions include 22 to 24 (DLN), Arg37, 60 to 63 (HFGR), Arg118, and Arg151. ATP-binding positions include Lys201, Glu323, and 353-356 (GGDT).

Belongs to the phosphoglycerate kinase family. In terms of assembly, monomer.

It is found in the cytoplasm. It catalyses the reaction (2R)-3-phosphoglycerate + ATP = (2R)-3-phospho-glyceroyl phosphate + ADP. The protein operates within carbohydrate degradation; glycolysis; pyruvate from D-glyceraldehyde 3-phosphate: step 2/5. The sequence is that of Phosphoglycerate kinase from Azorhizobium caulinodans (strain ATCC 43989 / DSM 5975 / JCM 20966 / LMG 6465 / NBRC 14845 / NCIMB 13405 / ORS 571).